A 473-amino-acid polypeptide reads, in one-letter code: Sucrose-6-phosphate hydrolase (473 aa).

Substrate contacts are provided by residues 44 to 47 (LLND), Gln63, 106 to 107 (YS), 167 to 168 (RD), and Glu224. The active site involves Asp47.

This sequence belongs to the glycosyl hydrolase 32 family.

The protein localises to the cytoplasm. The enzyme catalyses Hydrolysis of terminal non-reducing beta-D-fructofuranoside residues in beta-D-fructofuranosides.. Its pathway is glycan biosynthesis; sucrose metabolism. This chain is Sucrose-6-phosphate hydrolase (scrB), found in Lactococcus lactis subsp. lactis (Streptococcus lactis).